A 73-amino-acid chain; its full sequence is Translation initiation factor IF-1 (73 aa).

An S1-like domain is found at 1–73 (MSKKKDVIEM…TRGRITYRYK (73 aa)).

Belongs to the IF-1 family. In terms of assembly, component of the 30S ribosomal translation pre-initiation complex which assembles on the 30S ribosome in the order IF-2 and IF-3, IF-1 and N-formylmethionyl-tRNA(fMet); mRNA recruitment can occur at any time during PIC assembly.

It is found in the cytoplasm. In terms of biological role, one of the essential components for the initiation of protein synthesis. Stabilizes the binding of IF-2 and IF-3 on the 30S subunit to which N-formylmethionyl-tRNA(fMet) subsequently binds. Helps modulate mRNA selection, yielding the 30S pre-initiation complex (PIC). Upon addition of the 50S ribosomal subunit IF-1, IF-2 and IF-3 are released leaving the mature 70S translation initiation complex. This chain is Translation initiation factor IF-1, found in Roseiflexus castenholzii (strain DSM 13941 / HLO8).